Here is a 398-residue protein sequence, read N- to C-terminus: NADH-quinone oxidoreductase subunit D (398 aa).

It belongs to the complex I 49 kDa subunit family. As to quaternary structure, NDH-1 is composed of 14 different subunits. Subunits NuoB, C, D, E, F, and G constitute the peripheral sector of the complex.

It is found in the cell inner membrane. The enzyme catalyses a quinone + NADH + 5 H(+)(in) = a quinol + NAD(+) + 4 H(+)(out). Its function is as follows. NDH-1 shuttles electrons from NADH, via FMN and iron-sulfur (Fe-S) centers, to quinones in the respiratory chain. The immediate electron acceptor for the enzyme in this species is believed to be ubiquinone. Couples the redox reaction to proton translocation (for every two electrons transferred, four hydrogen ions are translocated across the cytoplasmic membrane), and thus conserves the redox energy in a proton gradient. The protein is NADH-quinone oxidoreductase subunit D of Caulobacter vibrioides (strain ATCC 19089 / CIP 103742 / CB 15) (Caulobacter crescentus).